The sequence spans 386 residues: Flap endonuclease 1 (386 aa).

The N-domain stretch occupies residues 1 to 104 (MGILGLSKLI…GELAKRAERR (104 aa)). Asp-34 contacts Mg(2+). Positions 47 and 70 each coordinate DNA. Mg(2+)-binding residues include Asp-86, Glu-158, Glu-160, Asp-179, and Asp-181. Residues 122 to 253 (EIEKFNRRLV…KRAIELINNY (132 aa)) form an I-domain region. A DNA-binding site is contributed by Glu-158. DNA-binding residues include Gly-231 and Asp-233. Asp-233 is a Mg(2+) binding site. The tract at residues 336-344 (TQVRLDSFF) is interaction with PCNA. Residues 354–386 (VNAAKRKAEEAKKSANNKKAKTSGGAARGRRPK) are disordered.

This sequence belongs to the XPG/RAD2 endonuclease family. FEN1 subfamily. Interacts with PCNA. Three molecules of FEN1 bind to one PCNA trimer with each molecule binding to one PCNA monomer. PCNA stimulates the nuclease activity without altering cleavage specificity. The cofactor is Mg(2+). Post-translationally, phosphorylated. Phosphorylation upon DNA damage induces relocalization to the nuclear plasma.

The protein resides in the nucleus. Its subcellular location is the nucleolus. It is found in the nucleoplasm. It localises to the mitochondrion. Functionally, structure-specific nuclease with 5'-flap endonuclease and 5'-3' exonuclease activities involved in DNA replication and repair. During DNA replication, cleaves the 5'-overhanging flap structure that is generated by displacement synthesis when DNA polymerase encounters the 5'-end of a downstream Okazaki fragment. It enters the flap from the 5'-end and then tracks to cleave the flap base, leaving a nick for ligation. Also involved in the long patch base excision repair (LP-BER) pathway, by cleaving within the apurinic/apyrimidinic (AP) site-terminated flap. Acts as a genome stabilization factor that prevents flaps from equilibrating into structures that lead to duplications and deletions. Also possesses 5'-3' exonuclease activity on nicked or gapped double-stranded DNA, and exhibits RNase H activity. Also involved in replication and repair of rDNA and in repairing mitochondrial DNA. This chain is Flap endonuclease 1, found in Drosophila pseudoobscura pseudoobscura (Fruit fly).